The following is a 393-amino-acid chain: Protein FAM53C (393 aa).

Met1 bears the N-acetylmethionine mark. The interval 77–120 (HLRPPSRGNSPKEPPLSQVLSPEPPDPEKLPVPPAPPSKRHCRS) is disordered. Ser122 and Ser162 each carry phosphoserine. Disordered regions lie at residues 141-167 (LWTP…PKRV) and 204-283 (QPCA…ARKT). Residues 204–215 (QPCATSPQSGSW) show a composition bias toward polar residues. A phosphoserine mark is found at Ser232, Ser234, Ser255, Ser273, and Ser299. The span at 241-256 (ASRFLPSARSSPASSP) shows a compositional bias: low complexity. Residues 343–355 (SCSPVEGSSQVLS) show a composition bias toward low complexity. A disordered region spans residues 343–365 (SCSPVEGSSQVLSESEEEEEGSV).

It belongs to the FAM53 family.

The sequence is that of Protein FAM53C from Mus musculus (Mouse).